A 79-amino-acid chain; its full sequence is Small ribosomal subunit protein bS21A (79 aa).

Residues Leu57–Arg79 form a disordered region.

Belongs to the bacterial ribosomal protein bS21 family.

This chain is Small ribosomal subunit protein bS21A, found in Rhizobium johnstonii (strain DSM 114642 / LMG 32736 / 3841) (Rhizobium leguminosarum bv. viciae).